A 340-amino-acid chain; its full sequence is Phosphoribosylformylglycinamidine cyclo-ligase (340 aa).

It belongs to the AIR synthase family.

It is found in the cytoplasm. It catalyses the reaction 2-formamido-N(1)-(5-O-phospho-beta-D-ribosyl)acetamidine + ATP = 5-amino-1-(5-phospho-beta-D-ribosyl)imidazole + ADP + phosphate + H(+). Its pathway is purine metabolism; IMP biosynthesis via de novo pathway; 5-amino-1-(5-phospho-D-ribosyl)imidazole from N(2)-formyl-N(1)-(5-phospho-D-ribosyl)glycinamide: step 2/2. The chain is Phosphoribosylformylglycinamidine cyclo-ligase from Streptococcus uberis (strain ATCC BAA-854 / 0140J).